A 722-amino-acid polypeptide reads, in one-letter code: Probable glycerol-3-phosphate dehydrogenase, mitochondrial (722 aa).

The transit peptide at 1–43 (MSWVRFTKTGVAVVATSAAAVLALDMTNERRFQRQVKDHFRTV) directs the protein to the mitochondrion. 76–104 (DVLIIGGGATGAGVALDAQTRGLKTALVE) provides a ligand contact to FAD. EF-hand domains are found at residues 624 to 659 (EEMQRAKERFQQLDKDRKGHITVNDLRKHFREHNQK) and 660 to 695 (IDERVLHELLNEVDLNKNGEIEIAEFFQLYSGLKGG). Residues aspartate 673, asparagine 675, asparagine 677, glutamate 679, and glutamate 684 each coordinate Ca(2+).

This sequence belongs to the FAD-dependent glycerol-3-phosphate dehydrogenase family. FAD is required as a cofactor.

It is found in the mitochondrion. It catalyses the reaction a quinone + sn-glycerol 3-phosphate = dihydroxyacetone phosphate + a quinol. The protein operates within polyol metabolism; glycerol degradation via glycerol kinase pathway; glycerone phosphate from sn-glycerol 3-phosphate (anaerobic route): step 1/1. With respect to regulation, calcium-binding enhances the activity of the enzyme. The chain is Probable glycerol-3-phosphate dehydrogenase, mitochondrial from Caenorhabditis elegans.